Here is a 389-residue protein sequence, read N- to C-terminus: Chalcone synthase 8 (389 aa).

The active site involves C164.

The protein belongs to the thiolase-like superfamily. Chalcone/stilbene synthases family.

The enzyme catalyses (E)-4-coumaroyl-CoA + 3 malonyl-CoA + 3 H(+) = 2',4,4',6'-tetrahydroxychalcone + 3 CO2 + 4 CoA. The protein operates within secondary metabolite biosynthesis; flavonoid biosynthesis. Its function is as follows. The primary product of this enzyme is 4,2',4',6'-tetrahydroxychalcone (also termed naringenin-chalcone or chalcone) which can under specific conditions spontaneously isomerize into naringenin. The chain is Chalcone synthase 8 (CHS8) from Medicago sativa (Alfalfa).